A 341-amino-acid chain; its full sequence is tRNA N6-adenosine threonylcarbamoyltransferase (341 aa).

Positions 114 and 118 each coordinate Fe cation. Substrate-binding positions include 136–140 (LVSGG), Asp170, Gly183, Asp187, and Asn275. Asp303 contributes to the Fe cation binding site.

This sequence belongs to the KAE1 / TsaD family. It depends on Fe(2+) as a cofactor.

It is found in the cytoplasm. It catalyses the reaction L-threonylcarbamoyladenylate + adenosine(37) in tRNA = N(6)-L-threonylcarbamoyladenosine(37) in tRNA + AMP + H(+). Required for the formation of a threonylcarbamoyl group on adenosine at position 37 (t(6)A37) in tRNAs that read codons beginning with adenine. Is involved in the transfer of the threonylcarbamoyl moiety of threonylcarbamoyl-AMP (TC-AMP) to the N6 group of A37, together with TsaE and TsaB. TsaD likely plays a direct catalytic role in this reaction. This chain is tRNA N6-adenosine threonylcarbamoyltransferase, found in Mycobacterium avium (strain 104).